Reading from the N-terminus, the 143-residue chain is FAD synthase (143 aa).

ATP-binding positions include 9–10 (TF), 14–17 (HPGH), and Asp92.

Belongs to the archaeal FAD synthase family. In terms of assembly, homodimer. It depends on a divalent metal cation as a cofactor.

It catalyses the reaction FMN + ATP + H(+) = FAD + diphosphate. It participates in cofactor biosynthesis; FAD biosynthesis; FAD from FMN: step 1/1. Catalyzes the transfer of the AMP portion of ATP to flavin mononucleotide (FMN) to produce flavin adenine dinucleotide (FAD) coenzyme. The protein is FAD synthase of Methanococcoides burtonii (strain DSM 6242 / NBRC 107633 / OCM 468 / ACE-M).